A 136-amino-acid polypeptide reads, in one-letter code: Group 1 truncated hemoglobin GlbN (136 aa).

Residue histidine 81 coordinates heme.

It belongs to the truncated hemoglobin family. Group I subfamily. As to quaternary structure, homodimer. It depends on heme as a cofactor.

Its function is as follows. Binds oxygen cooperatively with very high affinity (P(50) = 0.013 mmHg at 20 degrees Celsius) because of a fast combination (25 microM(-1)sec(-1)) and a slow dissociation (0.2 sec(-1)) rate. This chain is Group 1 truncated hemoglobin GlbN (glbN), found in Mycobacterium bovis (strain ATCC BAA-935 / AF2122/97).